The primary structure comprises 288 residues: MPINETASVTNCDTNFEPLIENLKLFLQLCYLTPSALFLSRVIYITAWKYRKKFRKQRFYTIFLADCVTGFILVNFSIFFTRPLIYVPQACEFVLEHIKKLALFLDIYYPCFRYLQAFQILVQILFVANRASCVLWPLSYSLFWKKWLKSILTTMAISPCLWIWTIAISDKMIVHGYGGLVVLYYRYVSWARSTLFFSILRLTSVITIVVATTTMLIKMSRMKKRIRESERRLCWASVYLSVCYLLPAIAEFEYFLVLKAKLFENSGILHGLVVICWDIQNICSTYVM.

7 helical membrane-spanning segments follow: residues 25–45 (LFLQ…VIYI), 59–79 (FYTI…FSIF), 118–138 (FQIL…LWPL), 148–168 (LKSI…TIAI), 197–217 (FSIL…TMLI), 238–258 (VYLS…FLVL), and 268–288 (ILHG…TYVM).

Belongs to the nematode receptor-like protein srg family.

Its subcellular location is the membrane. This Caenorhabditis elegans protein is Serpentine receptor class gamma-1 (srg-1).